A 305-amino-acid chain; its full sequence is Regulator of microtubule dynamics protein 1 (305 aa).

N6-succinyllysine is present on Lys-160. 2 TPR repeats span residues 163–199 (AICISDVGDYEGIKVKIANAYVIKEHFEKAIELNPKD) and 217–253 (PWYQRRIAKVLFANPPSSTYEEALRYFHKAEEVDPNF). At Lys-245 the chain carries N6-succinyllysine.

This sequence belongs to the RMDN family. As to quaternary structure, interacts with microtubules.

It localises to the cytoplasm. Its subcellular location is the cytoskeleton. The protein localises to the spindle. It is found in the spindle pole. The polypeptide is Regulator of microtubule dynamics protein 1 (Rmdn1) (Mus musculus (Mouse)).